The chain runs to 161 residues: Allophycocyanin beta chain (161 aa).

Asparagine 71 is subject to N4-methylasparagine. Cysteine 81 contacts (2R,3E)-phycocyanobilin.

It belongs to the phycobiliprotein family. Heterodimer of an alpha and a beta chain. Contains one covalently linked phycocyanobilin chromophore.

The protein resides in the plastid. It localises to the chloroplast thylakoid membrane. In terms of biological role, light-harvesting photosynthetic bile pigment-protein from the phycobiliprotein complex. Allophycocyanin has a maximum absorption at approximately 650 nanometers. The polypeptide is Allophycocyanin beta chain (apcB) (Aglaothamnion neglectum (Red alga)).